Consider the following 428-residue polypeptide: Phosphomethylpyrimidine synthase (428 aa).

Residues N66, M94, Y123, H162, 184–186 (SRG), 225–228 (DALR), and E264 each bind substrate. Residue H268 coordinates Zn(2+). A substrate-binding site is contributed by Y291. Zn(2+) is bound at residue H332. The [4Fe-4S] cluster site is built by C408, C411, and C415.

It belongs to the ThiC family. [4Fe-4S] cluster serves as cofactor.

It catalyses the reaction 5-amino-1-(5-phospho-beta-D-ribosyl)imidazole + S-adenosyl-L-methionine = 4-amino-2-methyl-5-(phosphooxymethyl)pyrimidine + CO + 5'-deoxyadenosine + formate + L-methionine + 3 H(+). The protein operates within cofactor biosynthesis; thiamine diphosphate biosynthesis. Functionally, catalyzes the synthesis of the hydroxymethylpyrimidine phosphate (HMP-P) moiety of thiamine from aminoimidazole ribotide (AIR) in a radical S-adenosyl-L-methionine (SAM)-dependent reaction. The chain is Phosphomethylpyrimidine synthase from Sulfolobus acidocaldarius (strain ATCC 33909 / DSM 639 / JCM 8929 / NBRC 15157 / NCIMB 11770).